Consider the following 227-residue polypeptide: Cytochrome c oxidase subunit 2 (227 aa).

The Mitochondrial intermembrane segment spans residues 1–14; that stretch reads MAYPFELGFQDATS. A helical membrane pass occupies residues 15–45; that stretch reads PIMEELLHFHDHTLMIVFLISSLVLYIISLM. At 46–59 the chain is on the mitochondrial matrix side; it reads LTTKLTHTSTMDAQ. A helical membrane pass occupies residues 60-87; sequence EVETIWTILPAIILILIALPSLRILYMM. At 88–227 the chain is on the mitochondrial intermembrane side; sequence DEINDPSLTV…HFENWSSSML (140 aa). Positions 161, 196, 198, 200, 204, and 207 each coordinate Cu cation. Glu-198 provides a ligand contact to Mg(2+).

This sequence belongs to the cytochrome c oxidase subunit 2 family. As to quaternary structure, component of the cytochrome c oxidase (complex IV, CIV), a multisubunit enzyme composed of 14 subunits. The complex is composed of a catalytic core of 3 subunits MT-CO1, MT-CO2 and MT-CO3, encoded in the mitochondrial DNA, and 11 supernumerary subunits COX4I, COX5A, COX5B, COX6A, COX6B, COX6C, COX7A, COX7B, COX7C, COX8 and NDUFA4, which are encoded in the nuclear genome. The complex exists as a monomer or a dimer and forms supercomplexes (SCs) in the inner mitochondrial membrane with NADH-ubiquinone oxidoreductase (complex I, CI) and ubiquinol-cytochrome c oxidoreductase (cytochrome b-c1 complex, complex III, CIII), resulting in different assemblies (supercomplex SCI(1)III(2)IV(1) and megacomplex MCI(2)III(2)IV(2)). Found in a complex with TMEM177, COA6, COX18, COX20, SCO1 and SCO2. Interacts with TMEM177 in a COX20-dependent manner. Interacts with COX20. Interacts with COX16. The cofactor is Cu cation.

The protein localises to the mitochondrion inner membrane. It carries out the reaction 4 Fe(II)-[cytochrome c] + O2 + 8 H(+)(in) = 4 Fe(III)-[cytochrome c] + 2 H2O + 4 H(+)(out). Functionally, component of the cytochrome c oxidase, the last enzyme in the mitochondrial electron transport chain which drives oxidative phosphorylation. The respiratory chain contains 3 multisubunit complexes succinate dehydrogenase (complex II, CII), ubiquinol-cytochrome c oxidoreductase (cytochrome b-c1 complex, complex III, CIII) and cytochrome c oxidase (complex IV, CIV), that cooperate to transfer electrons derived from NADH and succinate to molecular oxygen, creating an electrochemical gradient over the inner membrane that drives transmembrane transport and the ATP synthase. Cytochrome c oxidase is the component of the respiratory chain that catalyzes the reduction of oxygen to water. Electrons originating from reduced cytochrome c in the intermembrane space (IMS) are transferred via the dinuclear copper A center (CU(A)) of subunit 2 and heme A of subunit 1 to the active site in subunit 1, a binuclear center (BNC) formed by heme A3 and copper B (CU(B)). The BNC reduces molecular oxygen to 2 water molecules using 4 electrons from cytochrome c in the IMS and 4 protons from the mitochondrial matrix. In Neotamias bulleri (Buller's chipmunk), this protein is Cytochrome c oxidase subunit 2 (MT-CO2).